The primary structure comprises 442 residues: MSKIYVLDTNVLLQDPNAIFSFEENEVVIPAVVLEEVDSKKRYMDEVGRNARHVSKLIDALRQKGRLHEHVPLDTGGTLRIELNHRSFHQLQEIFIEKTNDNRILAVAKNLSLEEETKENGRPVILVSKDVLVRVKADAIGLLAEDFLNDRVVDNDEMYSGYKDLYISQQLFSSFYGKNQISVNDVKQHAFYPNQFALMKDELGGSSSAVGIADKTGTVLKRLVFDDEHIWGIRPKNVQQTMALELLLREDIPLVTLIGKAGTGKTLLALAAGLLQTEDLGIYKKLVVARPIVPVGKDIGYLPGEKEEKLKPWMQPIFDNLEFLFNAKKPGELDAILAGIGSIQVEALTYIRGRSIPDQFIIIDEAQNLTRHEVKTLLTRVGEGSKIVLMGDPEQIDHPYLDSLNNGLAYVVERFKGQPISGSVKLLKGERSGLAQLAADLL.

The region spanning 3 to 135 (KIYVLDTNVL…LVSKDVLVRV (133 aa)) is the PINc domain. Residue 259-266 (GKAGTGKT) participates in ATP binding.

The protein in the N-terminal section; belongs to the PINc/VapC protein family. This sequence in the C-terminal section; belongs to the PhoH family.

The enzyme catalyses n ATP + n H2O + wound RNA = n ADP + n phosphate + unwound RNA.. It catalyses the reaction ATP + H2O = ADP + phosphate + H(+). It carries out the reaction GTP + H2O = GDP + phosphate + H(+). Functionally, unwinds and/or cleaves 5'-tailed RNA in vitro. Has ATPase and GTPase activities. Unlike the protein in mycobacteria there does not seem to be an antitoxin gene upstream, suggesting this is not a toxin-antitoxin system. This is Protein PhoH2 from Bacillus subtilis (strain 168).